The following is a 227-amino-acid chain: ATP synthase F(0) complex subunit a (227 aa).

Helical transmembrane passes span 14 to 34 (LLGI…FPTP), 69 to 89 (WATI…LGLL), 99 to 119 (LSLN…IGML), 137 to 157 (LLIP…PLAL), 180 to 200 (FVLI…LFLL), and 202 to 222 (ILEV…LSLY).

It belongs to the ATPase A chain family. Component of the ATP synthase complex composed at least of ATP5F1A/subunit alpha, ATP5F1B/subunit beta, ATP5MC1/subunit c (homooctomer), MT-ATP6/subunit a, MT-ATP8/subunit 8, ATP5ME/subunit e, ATP5MF/subunit f, ATP5MG/subunit g, ATP5MK/subunit k, ATP5MJ/subunit j, ATP5F1C/subunit gamma, ATP5F1D/subunit delta, ATP5F1E/subunit epsilon, ATP5PF/subunit F6, ATP5PB/subunit b, ATP5PD/subunit d, ATP5PO/subunit OSCP. ATP synthase complex consists of a soluble F(1) head domain (subunits alpha(3) and beta(3)) - the catalytic core - and a membrane F(0) domain - the membrane proton channel (subunits c, a, 8, e, f, g, k and j). These two domains are linked by a central stalk (subunits gamma, delta, and epsilon) rotating inside the F1 region and a stationary peripheral stalk (subunits F6, b, d, and OSCP). Interacts with DNAJC30; interaction is direct.

It localises to the mitochondrion inner membrane. It carries out the reaction H(+)(in) = H(+)(out). Subunit a, of the mitochondrial membrane ATP synthase complex (F(1)F(0) ATP synthase or Complex V) that produces ATP from ADP in the presence of a proton gradient across the membrane which is generated by electron transport complexes of the respiratory chain. ATP synthase complex consist of a soluble F(1) head domain - the catalytic core - and a membrane F(1) domain - the membrane proton channel. These two domains are linked by a central stalk rotating inside the F(1) region and a stationary peripheral stalk. During catalysis, ATP synthesis in the catalytic domain of F(1) is coupled via a rotary mechanism of the central stalk subunits to proton translocation. With the subunit c (ATP5MC1), forms the proton-conducting channel in the F(0) domain, that contains two crucial half-channels (inlet and outlet) that facilitate proton movement from the mitochondrial intermembrane space (IMS) into the matrix. Protons are taken up via the inlet half-channel and released through the outlet half-channel, following a Grotthuss mechanism. This Squalus acanthias (Spiny dogfish) protein is ATP synthase F(0) complex subunit a.